An 82-amino-acid chain; its full sequence is Small ribosomal subunit protein bS16 (82 aa).

Belongs to the bacterial ribosomal protein bS16 family.

This is Small ribosomal subunit protein bS16 from Francisella tularensis subsp. holarctica (strain FTNF002-00 / FTA).